The sequence spans 225 residues: PKHD-type hydroxylase YbiX (225 aa).

The region spanning 78 to 177 (TLSTPLFNRY…RVASFMWIQS (100 aa)) is the Fe2OG dioxygenase domain. Residues His96, Asp98, and His158 each contribute to the Fe cation site. Arg168 provides a ligand contact to 2-oxoglutarate.

Requires Fe(2+) as cofactor. L-ascorbate serves as cofactor.

This Escherichia coli (strain SMS-3-5 / SECEC) protein is PKHD-type hydroxylase YbiX.